A 202-amino-acid polypeptide reads, in one-letter code: MSRYRGPRVRIIRRLGALPGLTNKTPQLKSSSITQSTSNKKISQYRIRLEEKQKLRFHYGITERQLLNYVRIARKAKGSTGEVLLQLLEMRLDNVIFRLGMFPTIPGARQLVNHRHILVNGPIVDIPSYQCKPQDFITIKNQQKSEAIISKNIEFYQKYKIPNHLTYNYLEKKGLVNQILDRESIGLKINELLVVEYYSRQA.

Residues 90–153 (MRLDNVIFRL…KSEAIISKNI (64 aa)) enclose the S4 RNA-binding domain.

Belongs to the universal ribosomal protein uS4 family. As to quaternary structure, part of the 30S ribosomal subunit. Contacts protein S5. The interaction surface between S4 and S5 is involved in control of translational fidelity.

Its subcellular location is the plastid. It localises to the chloroplast. One of the primary rRNA binding proteins, it binds directly to 16S rRNA where it nucleates assembly of the body of the 30S subunit. In terms of biological role, with S5 and S12 plays an important role in translational accuracy. The protein is Small ribosomal subunit protein uS4c (rps4) of Cyathophorum bulbosum (Moss).